We begin with the raw amino-acid sequence, 472 residues long: Phosphoglucosamine mutase (472 aa).

The Phosphoserine intermediate role is filled by serine 123. Serine 123, aspartate 262, aspartate 264, and aspartate 266 together coordinate Mg(2+). Position 123 is a phosphoserine (serine 123).

It belongs to the phosphohexose mutase family. The cofactor is Mg(2+). Post-translationally, activated by phosphorylation.

The enzyme catalyses alpha-D-glucosamine 1-phosphate = D-glucosamine 6-phosphate. Functionally, catalyzes the conversion of glucosamine-6-phosphate to glucosamine-1-phosphate. The protein is Phosphoglucosamine mutase of Synechococcus elongatus (strain ATCC 33912 / PCC 7942 / FACHB-805) (Anacystis nidulans R2).